We begin with the raw amino-acid sequence, 487 residues long: GTPase Der (487 aa).

2 EngA-type G domains span residues 3–167 and 203–378; these read FTLA…EGFA and LQIA…DIWN. GTP-binding positions include 9-16, 56-60, 119-122, 209-216, 256-260, and 321-324; these read GRPNVGKS, DTAGL, NKAE, GRPNAGKS, DTAGM, and NKWD. Residues 379–463 enclose the KH-like domain; that stretch reads RRITTARLNT…PIRLTMRGQG (85 aa). The tract at residues 451-487 is disordered; it reads PGTPIRLTMRGQGDKNPFKERKFRTPSRLRKHLGKKD. The span at 471-487 shows a compositional bias: basic residues; the sequence is RKFRTPSRLRKHLGKKD.

Belongs to the TRAFAC class TrmE-Era-EngA-EngB-Septin-like GTPase superfamily. EngA (Der) GTPase family. In terms of assembly, associates with the 50S ribosomal subunit.

Functionally, GTPase that plays an essential role in the late steps of ribosome biogenesis. The polypeptide is GTPase Der (Cereibacter sphaeroides (strain ATCC 17029 / ATH 2.4.9) (Rhodobacter sphaeroides)).